Consider the following 89-residue polypeptide: Ubiquinol-cytochrome-c reductase complex assembly factor 3 (89 aa).

Residues Met-1–Ala-7 are Mitochondrial matrix-facing. A helical transmembrane segment spans residues Leu-8–Val-28. The tract at residues Ile-23 to Trp-80 is mediates lipid-binding. At Thr-29–Ala-89 the chain is on the mitochondrial intermembrane side.

This sequence belongs to the UQCC3 family. In terms of assembly, associates with the ubiquinol-cytochrome c reductase complex (mitochondrial respiratory chain complex III(CIII) or cytochrome b-c1 complex). Interacts with UQCC1. Forms a complex, named COMC, composed of UQCC1, UQCC2; UQCC3 and UQCC4; mediates MT-CYB hemylation and association with the first nuclear-encoded complex III subunit UQCRQ. Post-translationally, probably cleaved by OMA1 under mitochondrial stress conditions.

It is found in the mitochondrion inner membrane. In terms of biological role, required for the assembly of the ubiquinol-cytochrome c reductase complex (mitochondrial respiratory chain complex III or cytochrome b-c1 complex), mediating cytochrome b recruitment and probably stabilization within the complex. Thereby, plays an important role in ATP production by mitochondria. Cardiolipin-binding protein, it may also control the cardiolipin composition of mitochondria membranes and their morphology. The sequence is that of Ubiquinol-cytochrome-c reductase complex assembly factor 3 from Rattus norvegicus (Rat).